Consider the following 363-residue polypeptide: Peptide chain release factor 1 (363 aa).

Gln-237 bears the N5-methylglutamine mark. Positions 286–295 are enriched in basic and acidic residues; sequence EKRRSAEATT. Residues 286-305 are disordered; sequence EKRRSAEATTRRNLVGSGDR.

It belongs to the prokaryotic/mitochondrial release factor family. In terms of processing, methylated by PrmC. Methylation increases the termination efficiency of RF1.

The protein localises to the cytoplasm. Its function is as follows. Peptide chain release factor 1 directs the termination of translation in response to the peptide chain termination codons UAG and UAA. This is Peptide chain release factor 1 from Shewanella amazonensis (strain ATCC BAA-1098 / SB2B).